The following is a 368-amino-acid chain: 3-dehydroquinate synthase (368 aa).

Residues 112-116, 136-137, K149, and K158 contribute to the NAD(+) site; these read GVIGD and TT. Residues E191, H256, and H273 each coordinate Zn(2+).

It belongs to the sugar phosphate cyclases superfamily. Dehydroquinate synthase family. It depends on Co(2+) as a cofactor. Zn(2+) serves as cofactor. The cofactor is NAD(+).

It is found in the cytoplasm. The catalysed reaction is 7-phospho-2-dehydro-3-deoxy-D-arabino-heptonate = 3-dehydroquinate + phosphate. Its pathway is metabolic intermediate biosynthesis; chorismate biosynthesis; chorismate from D-erythrose 4-phosphate and phosphoenolpyruvate: step 2/7. Its function is as follows. Catalyzes the conversion of 3-deoxy-D-arabino-heptulosonate 7-phosphate (DAHP) to dehydroquinate (DHQ). This chain is 3-dehydroquinate synthase, found in Prochlorococcus marinus (strain NATL1A).